The chain runs to 175 residues: Ribosome maturation factor RimM (175 aa).

The 77-residue stretch at 96 to 172 (PDTYYDHQLE…LIEIDPPDGL (77 aa)) folds into the PRC barrel domain.

The protein belongs to the RimM family. As to quaternary structure, binds ribosomal protein uS19.

It localises to the cytoplasm. Functionally, an accessory protein needed during the final step in the assembly of 30S ribosomal subunit, possibly for assembly of the head region. Essential for efficient processing of 16S rRNA. May be needed both before and after RbfA during the maturation of 16S rRNA. It has affinity for free ribosomal 30S subunits but not for 70S ribosomes. This chain is Ribosome maturation factor RimM, found in Mycolicibacterium paratuberculosis (strain ATCC BAA-968 / K-10) (Mycobacterium paratuberculosis).